Consider the following 684-residue polypeptide: Glycine--tRNA ligase beta subunit (684 aa).

It belongs to the class-II aminoacyl-tRNA synthetase family. In terms of assembly, tetramer of two alpha and two beta subunits.

The protein localises to the cytoplasm. It catalyses the reaction tRNA(Gly) + glycine + ATP = glycyl-tRNA(Gly) + AMP + diphosphate. This chain is Glycine--tRNA ligase beta subunit, found in Pseudomonas aeruginosa (strain ATCC 15692 / DSM 22644 / CIP 104116 / JCM 14847 / LMG 12228 / 1C / PRS 101 / PAO1).